The following is a 153-amino-acid chain: Large-conductance mechanosensitive channel (153 aa).

A run of 2 helical transmembrane segments spans residues 16 to 36 (VIDLAVGVVIGGAFGSIVKSL) and 88 to 108 (GLFINALVSFTIVAFAIFMLV).

It belongs to the MscL family. Homopentamer.

Its subcellular location is the cell inner membrane. Channel that opens in response to stretch forces in the membrane lipid bilayer. May participate in the regulation of osmotic pressure changes within the cell. The protein is Large-conductance mechanosensitive channel of Chromobacterium violaceum (strain ATCC 12472 / DSM 30191 / JCM 1249 / CCUG 213 / NBRC 12614 / NCIMB 9131 / NCTC 9757 / MK).